Consider the following 135-residue polypeptide: UPF0225 protein CV_3559 (135 aa).

The protein belongs to the UPF0225 family.

The chain is UPF0225 protein CV_3559 from Chromobacterium violaceum (strain ATCC 12472 / DSM 30191 / JCM 1249 / CCUG 213 / NBRC 12614 / NCIMB 9131 / NCTC 9757 / MK).